The primary structure comprises 622 residues: Chaperone protein HscA homolog (622 aa).

This sequence belongs to the heat shock protein 70 family.

Its function is as follows. Chaperone involved in the maturation of iron-sulfur cluster-containing proteins. Has a low intrinsic ATPase activity which is markedly stimulated by HscB. In Verminephrobacter eiseniae (strain EF01-2), this protein is Chaperone protein HscA homolog.